The primary structure comprises 102 residues: Monothiol glutaredoxin-S10 (102 aa).

The Glutaredoxin domain occupies 1-101; sequence MDVVARLASQ…ILLKEAGALW (101 aa). Cys-21 is a binding site for [2Fe-2S] cluster. Residues 99 to 102 carry the Responsive for interaction with TGA factors motif; it reads ALWL.

It belongs to the glutaredoxin family. CC-type subfamily.

It is found in the cytoplasm. The protein localises to the nucleus. Its function is as follows. May only reduce GSH-thiol disulfides, but not protein disulfides. In Arabidopsis thaliana (Mouse-ear cress), this protein is Monothiol glutaredoxin-S10 (GRXS10).